The primary structure comprises 133 residues: MARASRSIHARKKRRKLLKEARGYRGTKHTSYKRAKEQVWKSGVYAYVGRKQKKRDFRALWIQRINAAARRHGLSYSRFVHGLRLAGFDLDRKVLADLAVSEPEAFGAVAAQAKNALEGRPVERRVELGGAGR.

The protein belongs to the bacterial ribosomal protein bL20 family.

In terms of biological role, binds directly to 23S ribosomal RNA and is necessary for the in vitro assembly process of the 50S ribosomal subunit. It is not involved in the protein synthesizing functions of that subunit. This is Large ribosomal subunit protein bL20 from Rubrobacter xylanophilus (strain DSM 9941 / JCM 11954 / NBRC 16129 / PRD-1).